The sequence spans 1516 residues: Neurite extension and migration factor (1516 aa).

Positions 380–405 are enriched in basic and acidic residues; sequence LDKKKGKEEGQEDKGVEKKDGKDNGE. Disordered stretches follow at residues 380–440, 589–610, 1158–1225, 1373–1419, and 1437–1479; these read LDKK…GSFS, QKKKKQRNTNTDSIKTPFSQKQ, TFND…STKK, TPQE…PGYN, and LGNN…ESGT. 3 stretches are compositionally biased toward polar residues: residues 596 to 610, 1158 to 1170, and 1185 to 1194; these read NTNTDSIKTPFSQKQ, TFNDPSGQISTNN, and GAMNQSSSQK. The span at 1443–1453 shows a compositional bias: basic residues; the sequence is THKKLYRHKSS. Basic and acidic residues predominate over residues 1456–1479; that stretch reads ALRDEKCKGKHMEREQVHKDESGT.

Highly expressed in fetal and adult brain, predominantly in the cerebral cortex and the cerebellum. Also expressed in other tissues but to a lesser extent.

Its subcellular location is the nucleus. The protein resides in the cytoplasm. Involved in neurite outgrowth by regulating cell-cell adhesion via the N-cadherin signaling pathway. May act by regulating expression of protein-coding genes, such as N-cadherins and integrin beta-1 (ITGB1). The protein is Neurite extension and migration factor of Homo sapiens (Human).